We begin with the raw amino-acid sequence, 186 residues long: ATP synthase subunit delta (186 aa).

It belongs to the ATPase delta chain family. F-type ATPases have 2 components, F(1) - the catalytic core - and F(0) - the membrane proton channel. F(1) has five subunits: alpha(3), beta(3), gamma(1), delta(1), epsilon(1). F(0) has three main subunits: a(1), b(2) and c(10-14). The alpha and beta chains form an alternating ring which encloses part of the gamma chain. F(1) is attached to F(0) by a central stalk formed by the gamma and epsilon chains, while a peripheral stalk is formed by the delta and b chains.

It is found in the cell inner membrane. Functionally, f(1)F(0) ATP synthase produces ATP from ADP in the presence of a proton or sodium gradient. F-type ATPases consist of two structural domains, F(1) containing the extramembraneous catalytic core and F(0) containing the membrane proton channel, linked together by a central stalk and a peripheral stalk. During catalysis, ATP synthesis in the catalytic domain of F(1) is coupled via a rotary mechanism of the central stalk subunits to proton translocation. This protein is part of the stalk that links CF(0) to CF(1). It either transmits conformational changes from CF(0) to CF(1) or is implicated in proton conduction. This is ATP synthase subunit delta from Leptospira interrogans serogroup Icterohaemorrhagiae serovar copenhageni (strain Fiocruz L1-130).